A 446-amino-acid chain; its full sequence is N-succinylarginine dihydrolase (446 aa).

Substrate-binding positions include 19-28 (AGLSYGNVAS), Asn110, and 137-138 (HR). Glu174 is a catalytic residue. Arg214 lines the substrate pocket. His250 is an active-site residue. Positions 252 and 363 each coordinate substrate. The active-site Nucleophile is Cys369.

It belongs to the succinylarginine dihydrolase family. As to quaternary structure, homodimer.

It carries out the reaction N(2)-succinyl-L-arginine + 2 H2O + 2 H(+) = N(2)-succinyl-L-ornithine + 2 NH4(+) + CO2. Its pathway is amino-acid degradation; L-arginine degradation via AST pathway; L-glutamate and succinate from L-arginine: step 2/5. Its function is as follows. Catalyzes the hydrolysis of N(2)-succinylarginine into N(2)-succinylornithine, ammonia and CO(2). The sequence is that of N-succinylarginine dihydrolase from Pseudoalteromonas atlantica (strain T6c / ATCC BAA-1087).